The following is a 145-amino-acid chain: UPF0735 ACT domain-containing protein CLL_A2896 (145 aa).

The ACT domain occupies threonine 69 to methionine 144.

This sequence belongs to the UPF0735 family.

The chain is UPF0735 ACT domain-containing protein CLL_A2896 from Clostridium botulinum (strain Eklund 17B / Type B).